A 428-amino-acid chain; its full sequence is GTPase Obg (428 aa).

In terms of domain architecture, Obg spans 1–158 (MFVDQVKIYV…RDVILELKVL (158 aa)). In terms of domain architecture, OBG-type G spans 159 to 329 (ADVGLVGFPS…LLFEVANLLE (171 aa)). Residues 165–172 (GFPSVGKS), 190–194 (FTTIV), 212–215 (DLPG), 282–285 (NKMD), and 310–312 (SAV) each bind GTP. Mg(2+) contacts are provided by serine 172 and threonine 192. In terms of domain architecture, OCT spans 350–428 (KLETEGVKFD…ILEYEFEFID (79 aa)).

It belongs to the TRAFAC class OBG-HflX-like GTPase superfamily. OBG GTPase family. As to quaternary structure, monomer. Mg(2+) serves as cofactor.

It is found in the cytoplasm. Functionally, an essential GTPase which binds GTP, GDP and possibly (p)ppGpp with moderate affinity, with high nucleotide exchange rates and a fairly low GTP hydrolysis rate. Plays a role in control of the cell cycle, stress response, ribosome biogenesis and in those bacteria that undergo differentiation, in morphogenesis control. The protein is GTPase Obg of Bacillus cereus (strain Q1).